A 211-amino-acid polypeptide reads, in one-letter code: Beta-crystallin B3 (211 aa).

An N-acetylmethionine modification is found at M1. An N-acetylalanine; in Beta-crystallin B3, N-terminally processed modification is found at A2. The N-terminal arm stretch occupies residues 2–23 (AEQHGAPEQAAAGKSHGDLGGS). Beta/gamma crystallin 'Greek key' domains are found at residues 24 to 63 (YKVI…QVES) and 64 to 108 (GPWL…RPLN). A connecting peptide region spans residues 109–113 (IDSPH). Beta/gamma crystallin 'Greek key' domains follow at residues 114 to 155 (HKLH…RAIN) and 156 to 198 (GTWV…RRIR). Residues 200–211 (QKWHKRGRFPSS) are C-terminal arm.

The protein belongs to the beta/gamma-crystallin family. Homo/heterodimer, or complexes of higher-order. The structure of beta-crystallin oligomers seems to be stabilized through interactions between the N-terminal arms.

In terms of biological role, crystallins are the dominant structural components of the vertebrate eye lens. The polypeptide is Beta-crystallin B3 (CRYBB3) (Homo sapiens (Human)).